The sequence spans 986 residues: Mediator of RNA polymerase II transcription subunit 24 (986 aa).

6 consecutive short sequence motifs (LXXLL motif) follow at residues 128–132 (LNWLL), 341–345 (LTPLL), 445–449 (LDLLL), 554–558 (LVALL), 785–789 (LPNLL), and 855–859 (LMRLL).

This sequence belongs to the Mediator complex subunit 24 family. Component of the Mediator complex.

It is found in the nucleus. Component of the Mediator complex, a coactivator involved in the regulated transcription of nearly all RNA polymerase II-dependent genes. Mediator functions as a bridge to convey information from gene-specific regulatory proteins to the basal RNA polymerase II transcription machinery. Mediator is recruited to promoters by direct interactions with regulatory proteins and serves as a scaffold for the assembly of a functional preinitiation complex with RNA polymerase II and the general transcription factors. The polypeptide is Mediator of RNA polymerase II transcription subunit 24 (MED24) (Gallus gallus (Chicken)).